We begin with the raw amino-acid sequence, 583 residues long: Threonine--tRNA ligase (583 aa).

The interval 185-478 is catalytic; that stretch reads DHRKLGRELD…LVEHYGGAFP (294 aa). 3 residues coordinate Zn(2+): C278, H329, and H455.

It belongs to the class-II aminoacyl-tRNA synthetase family. Homodimer. Zn(2+) serves as cofactor.

The protein resides in the cytoplasm. It carries out the reaction tRNA(Thr) + L-threonine + ATP = L-threonyl-tRNA(Thr) + AMP + diphosphate + H(+). Catalyzes the attachment of threonine to tRNA(Thr) in a two-step reaction: L-threonine is first activated by ATP to form Thr-AMP and then transferred to the acceptor end of tRNA(Thr). Also edits incorrectly charged L-seryl-tRNA(Thr). This chain is Threonine--tRNA ligase, found in Borrelia hermsii (strain HS1 / DAH).